We begin with the raw amino-acid sequence, 1295 residues long: Protein FORGETTER 1 (1295 aa).

3 stretches are compositionally biased toward pro residues: residues Met-1 to Ala-14, Pro-75 to Ile-89, and Pro-162 to Glu-177. 4 disordered regions span residues Met-1–Ala-20, Arg-68–Gly-107, Leu-153–Arg-204, and Pro-626–Asp-688. The span at Glu-178 to Gly-193 shows a compositional bias: acidic residues. The short motif at Arg-643–Pro-650 is the Nuclear localization signal element. Residues Asp-669–Asp-688 show a composition bias toward acidic residues. A PHD-type zinc finger spans residues Phe-691–Lys-741.

Belongs to the SBNO family. Interacts with SWI/SNF and ISWI chromatin remodelers such as BRM, CHR11 and CHR17. Binds to histone H3.

It is found in the nucleus. Its function is as follows. Required for normal embryo development. Necessary to acquire heat stress (HS) memory, by modulating nucleosome occupancy and regulating heat-induced gene expression. Associates globally with the nucleosome-poor regions flanking the transcription units of expressed genes. Binds to the promoter regions, primarily to the proximal promoter just upstream of the transcriptional start sites (TSS) and somewhat more weakly to the region downstream of the transcription termination site (TTS), of actively expressed genes (e.g. HSA32, HSP18.2 and HSP22.0) in a heat-dependent fashion. This Arabidopsis thaliana (Mouse-ear cress) protein is Protein FORGETTER 1.